The chain runs to 266 residues: F-actin-capping protein subunit beta (266 aa).

Belongs to the F-actin-capping protein beta subunit family. In terms of assembly, component of the F-actin capping complex, composed of a heterodimer of an alpha and a beta subunit.

The protein localises to the cytoplasm. It localises to the cytoskeleton. It is found in the actin patch. F-actin-capping proteins bind in a Ca(2+)-independent manner to the fast growing ends of actin filaments (barbed end) thereby blocking the exchange of subunits at these ends. Unlike other capping proteins (such as gelsolin and severin), these proteins do not sever actin filaments. The protein is F-actin-capping protein subunit beta (cap2) of Aspergillus oryzae (strain ATCC 42149 / RIB 40) (Yellow koji mold).